Consider the following 338-residue polypeptide: Ketol-acid reductoisomerase (NADP(+)) (338 aa).

A KARI N-terminal Rossmann domain is found at 1-181 (MKVFYDKDCD…GGGKGGIIET (181 aa)). Residues 24 to 27 (YGSQ), Arg47, and Ser52 each bind NADP(+). The active site involves His107. Position 133 (Gly133) interacts with NADP(+). In terms of domain architecture, KARI C-terminal knotted spans 182–327 (NFKEETETDL…GQLRAMMPWI (146 aa)). Asp190, Glu194, Glu226, and Glu230 together coordinate Mg(2+). Ser251 is a substrate binding site.

It belongs to the ketol-acid reductoisomerase family. The cofactor is Mg(2+).

It carries out the reaction (2R)-2,3-dihydroxy-3-methylbutanoate + NADP(+) = (2S)-2-acetolactate + NADPH + H(+). The catalysed reaction is (2R,3R)-2,3-dihydroxy-3-methylpentanoate + NADP(+) = (S)-2-ethyl-2-hydroxy-3-oxobutanoate + NADPH + H(+). It functions in the pathway amino-acid biosynthesis; L-isoleucine biosynthesis; L-isoleucine from 2-oxobutanoate: step 2/4. It participates in amino-acid biosynthesis; L-valine biosynthesis; L-valine from pyruvate: step 2/4. Involved in the biosynthesis of branched-chain amino acids (BCAA). Catalyzes an alkyl-migration followed by a ketol-acid reduction of (S)-2-acetolactate (S2AL) to yield (R)-2,3-dihydroxy-isovalerate. In the isomerase reaction, S2AL is rearranged via a Mg-dependent methyl migration to produce 3-hydroxy-3-methyl-2-ketobutyrate (HMKB). In the reductase reaction, this 2-ketoacid undergoes a metal-dependent reduction by NADPH to yield (R)-2,3-dihydroxy-isovalerate. This Delftia acidovorans (strain DSM 14801 / SPH-1) protein is Ketol-acid reductoisomerase (NADP(+)).